Reading from the N-terminus, the 480-residue chain is Glutamyl-tRNA(Gln) amidotransferase subunit A (480 aa).

Residues Lys-74 and Ser-149 each act as charge relay system in the active site. The Acyl-ester intermediate role is filled by Ser-173.

The protein belongs to the amidase family. GatA subfamily. In terms of assembly, heterotrimer of A, B and C subunits.

The enzyme catalyses L-glutamyl-tRNA(Gln) + L-glutamine + ATP + H2O = L-glutaminyl-tRNA(Gln) + L-glutamate + ADP + phosphate + H(+). In terms of biological role, allows the formation of correctly charged Gln-tRNA(Gln) through the transamidation of misacylated Glu-tRNA(Gln) in organisms which lack glutaminyl-tRNA synthetase. The reaction takes place in the presence of glutamine and ATP through an activated gamma-phospho-Glu-tRNA(Gln). The protein is Glutamyl-tRNA(Gln) amidotransferase subunit A of Prochlorococcus marinus (strain MIT 9312).